The sequence spans 231 residues: Large ribosomal subunit protein uL1 (231 aa).

Belongs to the universal ribosomal protein uL1 family. As to quaternary structure, part of the 50S ribosomal subunit.

In terms of biological role, binds directly to 23S rRNA. The L1 stalk is quite mobile in the ribosome, and is involved in E site tRNA release. Protein L1 is also a translational repressor protein, it controls the translation of the L11 operon by binding to its mRNA. The protein is Large ribosomal subunit protein uL1 of Azotobacter vinelandii (strain DJ / ATCC BAA-1303).